A 416-amino-acid polypeptide reads, in one-letter code: MEFPKKAEIIAVGSELLLGQIANTNAQFISKQLAEIGVNVFYHTAVGDNPERLKQVIRIAEERSDFIIFSGGLGPTKDDLTKETIANTLGRPLVLNDEAFQSIEDYFKRTKRTMSPNNRKQALVIEGSDVLANHFGMAPGMLTEHESRYYMLLPGPPSELRPMFENEAKPLLLKKMGSNEKIVSTVLRFFGIGESQLEADLEDIIDAQTNPTIAPLAADGEVTLRLTAKHADEKETERLLKETEAVILERVGEFFYGYDDTSLVKELSIACKEKGITISAAESFTGGLFSEWLTDHSGASKLFAGGVVCYTNDVKQNVLGVKKETLDRFGAVSKECASELAKGVQKLTGSDIGISFTGVAGPDAQEGHEPGHVFIGISANGKEEVHEFHFAGSRTGIRKRGAKYGCHLILKLLEQK.

The protein belongs to the CinA family.

The chain is Putative competence-damage inducible protein from Bacillus subtilis (strain 168).